A 316-amino-acid polypeptide reads, in one-letter code: ATP synthase gamma chain (316 aa).

Belongs to the ATPase gamma chain family. In terms of assembly, F-type ATPases have 2 components, CF(1) - the catalytic core - and CF(0) - the membrane proton channel. CF(1) has five subunits: alpha(3), beta(3), gamma(1), delta(1), epsilon(1). CF(0) has three main subunits: a, b and c.

It localises to the cellular thylakoid membrane. In terms of biological role, produces ATP from ADP in the presence of a proton gradient across the membrane. The gamma chain is believed to be important in regulating ATPase activity and the flow of protons through the CF(0) complex. The polypeptide is ATP synthase gamma chain (Prochlorococcus marinus (strain NATL2A)).